The primary structure comprises 203 residues: GTP cyclohydrolase-2 (203 aa).

49 to 53 (RIHSE) serves as a coordination point for GTP. Zn(2+)-binding residues include cysteine 54, cysteine 65, and cysteine 67. Residues glutamine 70, 92-94 (EGR), and threonine 114 contribute to the GTP site. The Proton acceptor role is filled by aspartate 126. Arginine 128 functions as the Nucleophile in the catalytic mechanism. GTP-binding residues include threonine 149 and lysine 154.

The protein belongs to the GTP cyclohydrolase II family. It depends on Zn(2+) as a cofactor.

It catalyses the reaction GTP + 4 H2O = 2,5-diamino-6-hydroxy-4-(5-phosphoribosylamino)-pyrimidine + formate + 2 phosphate + 3 H(+). The protein operates within cofactor biosynthesis; riboflavin biosynthesis; 5-amino-6-(D-ribitylamino)uracil from GTP: step 1/4. Functionally, catalyzes the conversion of GTP to 2,5-diamino-6-ribosylamino-4(3H)-pyrimidinone 5'-phosphate (DARP), formate and pyrophosphate. The protein is GTP cyclohydrolase-2 of Shewanella oneidensis (strain ATCC 700550 / JCM 31522 / CIP 106686 / LMG 19005 / NCIMB 14063 / MR-1).